The chain runs to 428 residues: Histidine--tRNA ligase (428 aa).

It belongs to the class-II aminoacyl-tRNA synthetase family. In terms of assembly, homodimer.

The protein resides in the cytoplasm. The enzyme catalyses tRNA(His) + L-histidine + ATP = L-histidyl-tRNA(His) + AMP + diphosphate + H(+). This is Histidine--tRNA ligase (hisS) from Chlamydia muridarum (strain MoPn / Nigg).